Consider the following 614-residue polypeptide: Nuclear receptor subfamily 1 group D member 1 (614 aa).

Over residues 1-12 the composition is skewed to polar residues; sequence MTTLDSNNNTGG. The required for phosphorylation by CSNK1E and cytoplasmic localization stretch occupies residues 1 to 70; sequence MTTLDSNNNT…TQDPARSFGS (70 aa). The disordered stretch occupies residues 1–119; it reads MTTLDSNNNT…SSRVSPSKST (119 aa). The interval 1-128 is modulating; sequence MTTLDSNNNT…TSNITKLNGM (128 aa). Positions 14–34 are enriched in low complexity; it reads ITYIGSSGSSPSRTSPESLYS. Residues 35 to 48 are compositionally biased toward polar residues; it reads DNSNGSFQSLTQGC. The interval 49–284 is crucial for activation of GJA1; that stretch reads PTYFPPSPTG…PPRSPSPEPT (236 aa). Phosphoserine; by GSK3-beta is present on residues Ser-55 and Ser-59. A compositionally biased stretch (low complexity) spans 69–102; the sequence is GSIPPSLSDDGSPSSSSSSSSSSSSFYNGSPPGS. Positions 129 to 205 form a DNA-binding region, nuclear receptor; that stretch reads VLLCKVCGDV…VGMSRDAVRF (77 aa). 2 NR C4-type zinc fingers span residues 132-152 and 169-193; these read CKVC…CEGC and CLKN…FKKC. Residues Lys-191 and Lys-192 each carry the N6-acetyllysine; by KAT5 modification. Over residues 233–243 the composition is skewed to polar residues; sequence SQCPLETSPTQ. 2 disordered regions span residues 233-285 and 311-345; these read SQCP…EPTV and PGNF…DNNT. The segment covering 244-261 has biased composition (pro residues); the sequence is HPTPGPMGPSPPPAPVPS. At Thr-274 the chain carries Phosphothreonine; by CDK1. The 331-residue stretch at 284–614 folds into the NR LBD domain; sequence TVEDVISQVA…KLLSFRVDAQ (331 aa). Residues 311–324 show a composition bias toward polar residues; the sequence is PGNFNANHASGSPP. Position 400 is an N6-acetyllysine (Lys-400). Cys-418 serves as a coordination point for heme. Lys-591 carries the post-translational modification N6-acetyllysine. A heme-binding site is contributed by His-602.

This sequence belongs to the nuclear hormone receptor family. NR1 subfamily. As to quaternary structure, binds DNA as a monomer or a homodimer. Interacts with C1D, NR2E3 and SP1. Interacts with OPHN1 (via C-terminus). Interacts with ZNHIT1. Interacts with PER2; the interaction associates PER2 to BMAL1 promoter region. Interacts with CRY1. Interacts with CCAR2. Interacts with SIAH2. Interacts with CDK1. Interacts with FBXW7. Interacts with HUWE1. Interacts with NR0B2. Interacts with NFIL3. Interacts (via domain NR LBD) with HSP90AA1 and HSP90AB1. In terms of processing, ubiquitinated, leading to its proteasomal degradation. Ubiquitinated by SIAH2; leading to its proteasomal degradation. Ubiquitinated by the SCF(FBXW7) complex when phosphorylated by CDK1 leading to its proteasomal degradation. Rapidly ubiquitinated in response to inflammatory triggers and sumoylation is a prerequisite to its ubiquitination. Sumoylated by UBE2I, desumoylated by SENP1, and sumoylation is a prerequisite to its ubiquitination. Post-translationally, phosphorylated by CSNK1E; phosphorylation enhances its cytoplasmic localization. In terms of processing, undergoes lysosome-mediated degradation in a time-dependent manner in the liver. In terms of tissue distribution, widely expressed. Expressed at high levels in the liver, adipose tissue, skeletal muscle and brain. Also expressed in endothelial cells (ECs), vascular smooth muscle cells (VSMCs) and macrophages. Expression oscillates diurnally in the suprachiasmatic nucleus (SCN) of the hypothalamus as well as in peripheral tissues. Expression increases during the differentiation of pre-adipocytes into mature adipocytes. Expressed at high levels in some squamous carcinoma cell lines.

The protein resides in the nucleus. It is found in the cytoplasm. Its subcellular location is the cell projection. The protein localises to the dendrite. It localises to the dendritic spine. Transcriptional repressor which coordinates circadian rhythm and metabolic pathways in a heme-dependent manner. Integral component of the complex transcription machinery that governs circadian rhythmicity and forms a critical negative limb of the circadian clock by directly repressing the expression of core clock components BMAL1, CLOCK and CRY1. Also regulates genes involved in metabolic functions, including lipid and bile acid metabolism, adipogenesis, gluconeogenesis and the macrophage inflammatory response. Acts as a receptor for heme which stimulates its interaction with the NCOR1/HDAC3 corepressor complex, enhancing transcriptional repression. Recognizes two classes of DNA response elements within the promoter of its target genes and can bind to DNA as either monomers or homodimers, depending on the nature of the response element. Binds as a monomer to a response element composed of the consensus half-site motif 5'-[A/G]GGTCA-3' preceded by an A/T-rich 5' sequence (RevRE), or as a homodimer to a direct repeat of the core motif spaced by two nucleotides (RevDR-2). Acts as a potent competitive repressor of ROR alpha (RORA) function and regulates the levels of its ligand heme by repressing the expression of PPARGC1A, a potent inducer of heme synthesis. Regulates lipid metabolism by repressing the expression of APOC3 and by influencing the activity of sterol response element binding proteins (SREBPs); represses INSIG2 which interferes with the proteolytic activation of SREBPs which in turn govern the rhythmic expression of enzymes with key functions in sterol and fatty acid synthesis. Regulates gluconeogenesis via repression of G6PC1 and PEPCK and adipocyte differentiation via repression of PPARG. Regulates glucagon release in pancreatic alpha-cells via the AMPK-NAMPT-SIRT1 pathway and the proliferation, glucose-induced insulin secretion and expression of key lipogenic genes in pancreatic-beta cells. Positively regulates bile acid synthesis by increasing hepatic expression of CYP7A1 via repression of NR0B2 and NFIL3 which are negative regulators of CYP7A1. Modulates skeletal muscle oxidative capacity by regulating mitochondrial biogenesis and autophagy; controls mitochondrial biogenesis and respiration by interfering with the STK11-PRKAA1/2-SIRT1-PPARGC1A signaling pathway. Represses the expression of SERPINE1/PAI1, an important modulator of cardiovascular disease and the expression of inflammatory cytokines and chemokines in macrophages. Represses gene expression at a distance in macrophages by inhibiting the transcription of enhancer-derived RNAs (eRNAs). Plays a role in the circadian regulation of body temperature and negatively regulates thermogenic transcriptional programs in brown adipose tissue (BAT); imposes a circadian oscillation in BAT activity, increasing body temperature when awake and depressing thermogenesis during sleep. In concert with NR2E3, regulates transcriptional networks critical for photoreceptor development and function. In addition to its activity as a repressor, can also act as a transcriptional activator. In the ovarian granulosa cells acts as a transcriptional activator of STAR which plays a role in steroid biosynthesis. In collaboration with SP1, activates GJA1 transcription in a heme-independent manner. Represses the transcription of CYP2B10, CYP4A10 and CYP4A14. Represses the transcription of CES2. Represses and regulates the circadian expression of TSHB in a NCOR1-dependent manner. Negatively regulates the protein stability of NR3C1 and influences the time-dependent subcellular distribution of NR3C1, thereby affecting its transcriptional regulatory activity. Plays a critical role in the circadian control of neutrophilic inflammation in the lung; under resting, non-stress conditions, acts as a rhythmic repressor to limit inflammatory activity whereas in the presence of inflammatory triggers undergoes ubiquitin-mediated degradation thereby relieving inhibition of the inflammatory response. Plays a key role in the circadian regulation of microglial activation and neuroinflammation; suppresses microglial activation through the NF-kappaB pathway in the central nervous system. Plays a role in the regulation of the diurnal rhythms of lipid and protein metabolism in the skeletal muscle via transcriptional repression of genes controlling lipid and amino acid metabolism in the muscle. This chain is Nuclear receptor subfamily 1 group D member 1 (NR1D1), found in Homo sapiens (Human).